We begin with the raw amino-acid sequence, 146 residues long: Large ribosomal subunit protein uL15 (146 aa).

Residues 1 to 10 (MTLKLHDLRP) are compositionally biased toward basic and acidic residues. Positions 1–41 (MTLKLHDLRPARGSKTARTRVGRGDGSKGKTAGRGTKGTRA) are disordered.

The protein belongs to the universal ribosomal protein uL15 family. In terms of assembly, part of the 50S ribosomal subunit.

Binds to the 23S rRNA. This is Large ribosomal subunit protein uL15 from Mycobacterium bovis (strain BCG / Pasteur 1173P2).